Reading from the N-terminus, the 89-residue chain is Small ribosomal subunit protein uS15 (89 aa).

Belongs to the universal ribosomal protein uS15 family. Part of the 30S ribosomal subunit. Forms a bridge to the 50S subunit in the 70S ribosome, contacting the 23S rRNA.

Functionally, one of the primary rRNA binding proteins, it binds directly to 16S rRNA where it helps nucleate assembly of the platform of the 30S subunit by binding and bridging several RNA helices of the 16S rRNA. In terms of biological role, forms an intersubunit bridge (bridge B4) with the 23S rRNA of the 50S subunit in the ribosome. This is Small ribosomal subunit protein uS15 from Marinobacter nauticus (strain ATCC 700491 / DSM 11845 / VT8) (Marinobacter aquaeolei).